The chain runs to 288 residues: Structure-specific endonuclease subunit SLX1 (288 aa).

The 84-residue stretch at 10–93 folds into the GIY-YIG domain; the sequence is DFYCSYLLRS…QHSYKTRFIE (84 aa). Residues 209–265 form an SLX1-type zinc finger; sequence CMICDKKIDYIHDEGTQMVGFCSDDECDFLSCLSCLYKEFTKNSKQIIPKSGHCPNC.

It belongs to the SLX1 family. In terms of assembly, forms a heterodimer with SLX4. The cofactor is a divalent metal cation.

The protein resides in the nucleus. Its function is as follows. Catalytic subunit of the SLX1-SLX4 structure-specific endonuclease that resolves DNA secondary structures generated during DNA repair and recombination. Has endonuclease activity towards branched DNA substrates, introducing single-strand cuts in duplex DNA close to junctions with ss-DNA. This chain is Structure-specific endonuclease subunit SLX1, found in Kluyveromyces lactis (strain ATCC 8585 / CBS 2359 / DSM 70799 / NBRC 1267 / NRRL Y-1140 / WM37) (Yeast).